Reading from the N-terminus, the 486-residue chain is Aspartyl/glutamyl-tRNA(Asn/Gln) amidotransferase subunit B (486 aa).

Belongs to the GatB/GatE family. GatB subfamily. In terms of assembly, heterotrimer of A, B and C subunits.

It catalyses the reaction L-glutamyl-tRNA(Gln) + L-glutamine + ATP + H2O = L-glutaminyl-tRNA(Gln) + L-glutamate + ADP + phosphate + H(+). The enzyme catalyses L-aspartyl-tRNA(Asn) + L-glutamine + ATP + H2O = L-asparaginyl-tRNA(Asn) + L-glutamate + ADP + phosphate + 2 H(+). Allows the formation of correctly charged Asn-tRNA(Asn) or Gln-tRNA(Gln) through the transamidation of misacylated Asp-tRNA(Asn) or Glu-tRNA(Gln) in organisms which lack either or both of asparaginyl-tRNA or glutaminyl-tRNA synthetases. The reaction takes place in the presence of glutamine and ATP through an activated phospho-Asp-tRNA(Asn) or phospho-Glu-tRNA(Gln). The sequence is that of Aspartyl/glutamyl-tRNA(Asn/Gln) amidotransferase subunit B from Orientia tsutsugamushi (strain Ikeda) (Rickettsia tsutsugamushi).